Reading from the N-terminus, the 296-residue chain is tRNA pseudouridine synthase B (296 aa).

The Nucleophile role is filled by D38.

Belongs to the pseudouridine synthase TruB family. Type 1 subfamily.

The enzyme catalyses uridine(55) in tRNA = pseudouridine(55) in tRNA. Responsible for synthesis of pseudouridine from uracil-55 in the psi GC loop of transfer RNAs. The polypeptide is tRNA pseudouridine synthase B (Synechocystis sp. (strain ATCC 27184 / PCC 6803 / Kazusa)).